The primary structure comprises 427 residues: Gamma-glutamyl phosphate reductase (427 aa).

This sequence belongs to the gamma-glutamyl phosphate reductase family.

It localises to the cytoplasm. It catalyses the reaction L-glutamate 5-semialdehyde + phosphate + NADP(+) = L-glutamyl 5-phosphate + NADPH + H(+). The protein operates within amino-acid biosynthesis; L-proline biosynthesis; L-glutamate 5-semialdehyde from L-glutamate: step 2/2. Catalyzes the NADPH-dependent reduction of L-glutamate 5-phosphate into L-glutamate 5-semialdehyde and phosphate. The product spontaneously undergoes cyclization to form 1-pyrroline-5-carboxylate. This is Gamma-glutamyl phosphate reductase from Brucella ovis (strain ATCC 25840 / 63/290 / NCTC 10512).